A 218-amino-acid polypeptide reads, in one-letter code: Pyridoxine/pyridoxamine 5'-phosphate oxidase (218 aa).

Substrate contacts are provided by residues 14–17 (RREY) and Lys-72. FMN-binding positions include 67 to 72 (RIVLLK), 82 to 83 (YT), Arg-88, Lys-89, and Gln-111. Positions 129, 133, and 137 each coordinate substrate. FMN-binding positions include 146 to 147 (QS) and Trp-191. 197–199 (RLH) is a substrate binding site. Arg-201 serves as a coordination point for FMN.

The protein belongs to the pyridoxamine 5'-phosphate oxidase family. Homodimer. Requires FMN as cofactor.

It carries out the reaction pyridoxamine 5'-phosphate + O2 + H2O = pyridoxal 5'-phosphate + H2O2 + NH4(+). The catalysed reaction is pyridoxine 5'-phosphate + O2 = pyridoxal 5'-phosphate + H2O2. The protein operates within cofactor metabolism; pyridoxal 5'-phosphate salvage; pyridoxal 5'-phosphate from pyridoxamine 5'-phosphate: step 1/1. It participates in cofactor metabolism; pyridoxal 5'-phosphate salvage; pyridoxal 5'-phosphate from pyridoxine 5'-phosphate: step 1/1. Its function is as follows. Catalyzes the oxidation of either pyridoxine 5'-phosphate (PNP) or pyridoxamine 5'-phosphate (PMP) into pyridoxal 5'-phosphate (PLP). The polypeptide is Pyridoxine/pyridoxamine 5'-phosphate oxidase (Enterobacter sp. (strain 638)).